The primary structure comprises 502 residues: Membrane-bound lytic murein transglycosylase F (502 aa).

An N-terminal signal peptide occupies residues 1–33; that stretch reads MSRFISTFRSSSAQLSIVLAVILATGCSQPTTL. The non-LT domain stretch occupies residues 34–264; that stretch reads QEIREEGVLH…QLAERFYGHL (231 aa). The LT domain stretch occupies residues 265–502; sequence DRLNYVGART…PELRLIPPTL (238 aa). Glutamate 311 is a catalytic residue. The disordered stretch occupies residues 457–502; sequence PSASGLEDQLAWLGDNEAGPEAPAKESQPDLRADLPPELRLIPPTL. Residues 479 to 493 are compositionally biased toward basic and acidic residues; the sequence is PAKESQPDLRADLPP.

It in the N-terminal section; belongs to the bacterial solute-binding protein 3 family. In the C-terminal section; belongs to the transglycosylase Slt family.

The protein localises to the cell outer membrane. It catalyses the reaction Exolytic cleavage of the (1-&gt;4)-beta-glycosidic linkage between N-acetylmuramic acid (MurNAc) and N-acetylglucosamine (GlcNAc) residues in peptidoglycan, from either the reducing or the non-reducing ends of the peptidoglycan chains, with concomitant formation of a 1,6-anhydrobond in the MurNAc residue.. In terms of biological role, murein-degrading enzyme that degrades murein glycan strands and insoluble, high-molecular weight murein sacculi, with the concomitant formation of a 1,6-anhydromuramoyl product. Lytic transglycosylases (LTs) play an integral role in the metabolism of the peptidoglycan (PG) sacculus. Their lytic action creates space within the PG sacculus to allow for its expansion as well as for the insertion of various structures such as secretion systems and flagella. This chain is Membrane-bound lytic murein transglycosylase F, found in Marinobacter nauticus (strain ATCC 700491 / DSM 11845 / VT8) (Marinobacter aquaeolei).